We begin with the raw amino-acid sequence, 2151 residues long: MLLQRRSWLWLYIRIGVILGDILGRKPSIREQHGGNSCYQLNRLFCDFQEADNYCHAQRGRLAHTWNPKLRGFLKSFLNEETVWWVRGNLTLPGSHPGINQTGGDDVLRNQKPGECPSVVTHSNAVFSRWNLCIEKHHFICQAAAFPPQGASIWRNEFGPGPLLPMKRRGAETERHMIPGNGPPLAMCHQPAPPELFETLCFPIDPASSAPPKATHRMTITSLTGRPQVTSDTLASSSPPQGTSDTPASSSPPQVTSATSASSSPPQGTSDTPASSSPPQVTSATSASSSPPQGTSDTPASSSPPQVTSATSASSSPPQGTSDTPASSSPPQVTSATSASSSPPQGTSDTPASSSPPQGTLDTPSSSSPPQGTSDTPASSSPPQGTSETPASNSPPQGTSETPGFSSPPQVTTATLVSSSPPQVTSETPASSSPTQVTSETPASSSPTQVTSDTPASNSPPQGTSDTPGFSSPTQVTTATLVSSSPPQVTSDTPASSSPPQVTSDTPASSSPPQVTSETPASSSPPQVTSDTSASISPPQVISDTPASSSPPQVTSETPASSSPTNMTSDTPASSSPTNMTSDTPASSSPTNMTSDTPASSSPPWPVITEVTRPESTIPAGRSLANITSKAQEDSPLGVISTHPQMSFQSSTSQALDETAGERVPTIPDFQAHSEFQKACAILQRLRDFLPTSPTSAQVSVANLLIDLSEQLLVLPFQKNNSWSSQTPAVSCPFQPLGRLTTTEKSSHQMAQQDMEQVEDMLETSLMALGEIHRAFCQQSLCPQSAVTLASPSATLMLSSQNVSTLPLSTYTLGEPAPLTLGFPSAEALKELLNKHPGVNLQVTGLAFNPFKTLDDKNIVGSIGNVQLSSAYQSIRVHDLIEDIEIMLWRNASMETQPTSLNTSTDHFTISVNITSLEKTLIVTIEPESPLLMTLHLGFQDQLAHTHFYLNISLPRDQVWQKDEEYTWVLTPENLWYGTGTYYIMAVENKSTEAAQHTPVLVSVVTAVTQCYFWDRYNRTWKSDGCQVGPKSTILKTQCLCDHLTFFSSDFFIVPRTVDVENTIKLLLHVTNNPVGVSLLSSLLGFYILLAMWASRKDREDMQKVKVTVLADNDPSSASHYLIQVYTGYRRRAATTAKVVITLYGSEGHSEPHHLCDPEKTVFERGALDVFLLSTGSWLGDLHGLRLWHDNSGDSPSWYVSQVIVSDMTTRKKWHFQCNCWLAVDLGNCERDRVFTPASRSELSSFRHLFSSTIVEKFTQDYLWLSVATRHPWNQFTRVQRLSCCMALLLCDMVINIMFWKMGGTTAKRGTEQLGPLAVTLSELLVSIQTSIILFPIHLIFGRLFQLIHPPEALPQLPFIQAAWPPALVCESPSLTQVVKELKETVGFLLRRNTQLLSECEPSSCSSCDINKLAKLLSGLIYCHLEDEGCHQQTESHWEDAVSENHYHFCRYLLQLLRRLKAHLEALGATQDHQSCDFSEAVSQLQNLQELLETQTLRRGPGPCRHSTSFPILSPGEGKKPMSFCLFRWLKCSCWLLLGVISLASAFFITLYSLELDKDQATSWVISMMLSVLQDIFISQPIKVIFLTLLFSLMANHMPWLNKDKEQHARRIVALWAKCPWSAPGLRDKNNPIYTAPAMNNLAKPTRKAWKKQLSKLTGGTLVQILFLTLLMTTVYSAKDSSRFFLHRAIWKRFSHRFSEIKTVEDFYPWANGTLLPNLYGDYRGFITDGNSFLLGNVLIRQTRIPNDIFFPGSLHKQMKSPPQHQEDRENYGAGWVPPDTNITKVDSIWHYQNQESLGGYPIQGELATYSGGGYVVRLGRNHSAATRVLQHLEQRRWLDHCTKALFVEFTVFNANVNLLCAVTLILESSGVGTFLTSLQLDSLTSLQSSERGFAWIVSQVVYYLLVCYYAFIQGCRLKRQRLAFFTRKRNLLDTSIVLISFSILGLSMQSLSLLHKKMQQYHCDRDRFISFYEALRVNSAVTHLRGFLLLFATVRVWDLLRHHAQLQVINKTLSKAWDEVLGFILIIVVLLSSYAMTFNLLFGWSISDYQSFFRSIVTVVGLLMGTSKHKEVIALYPILGSLLVLSSIILMGLVIINLFVSAILIAFGKERKACEKEATLTDMLLQKLSSLLGIRLHQNPSEEHADNTGY.

The N-terminal stretch at 1–20 (MLLQRRSWLWLYIRIGVILG) is a signal peptide. The Extracellular segment spans residues 25-1073 (RKPSIREQHG…IKLLLHVTNN (1049 aa)). Residues 34–142 (GGNSCYQLNR…CIEKHHFICQ (109 aa)) form the C-type lectin domain. Disulfide bonds link cysteine 55-cysteine 141 and cysteine 116-cysteine 133. Asparagine 89 is a glycosylation site (N-linked (GlcNAc...) asparagine). Polar residues predominate over residues 222-245 (SLTGRPQVTSDTLASSSPPQGTSD). The segment at 222 to 609 (SLTGRPQVTS…SSSPPWPVIT (388 aa)) is disordered. Positions 246–348 (TPASSSPPQV…ASSSPPQGTS (103 aa)) are enriched in low complexity. 2 stretches are compositionally biased toward polar residues: residues 349 to 363 (DTPA…TLDT) and 371 to 600 (QGTS…TPAS). 5 N-linked (GlcNAc...) asparagine glycosylation sites follow: asparagine 566, asparagine 579, asparagine 592, asparagine 913, and asparagine 951. The GAIN-B domain occupies 899-1061 (TSLNTSTDHF…FIVPRTVDVE (163 aa)). 2 disulfides stabilise this stretch: cysteine 1011–cysteine 1039 and cysteine 1026–cysteine 1041. Residues 1011 to 1061 (CYFWDRYNRTWKSDGCQVGPKSTILKTQCLCDHLTFFSSDFFIVPRTVDVE) form a GPS region. The tract at residues 1045 to 1061 (TFFSSDFFIVPRTVDVE) is stachel. Residues 1074–1094 (PVGVSLLSSLLGFYILLAMWA) traverse the membrane as a helical segment. Residues 1095 to 1283 (SRKDREDMQK…NQFTRVQRLS (189 aa)) lie on the Cytoplasmic side of the membrane. The PLAT domain maps to 1119–1236 (SHYLIQVYTG…GNCERDRVFT (118 aa)). The chain crosses the membrane as a helical span at residues 1284-1304 (CCMALLLCDMVINIMFWKMGG). Residues 1305–1320 (TTAKRGTEQLGPLAVT) lie on the Extracellular side of the membrane. Residues 1321–1341 (LSELLVSIQTSIILFPIHLIF) form a helical membrane-spanning segment. At 1342-1533 (GRLFQLIHPP…FCLFRWLKCS (192 aa)) the chain is on the cytoplasmic side. The helical transmembrane segment at 1534 to 1554 (CWLLLGVISLASAFFITLYSL) threads the bilayer. The Extracellular segment spans residues 1555–1575 (ELDKDQATSWVISMMLSVLQD). Residues 1576 to 1596 (IFISQPIKVIFLTLLFSLMAN) traverse the membrane as a helical segment. The Cytoplasmic segment spans residues 1597–1665 (HMPWLNKDKE…KLTGGTLVQI (69 aa)). A helical transmembrane segment spans residues 1666–1676 (LFLTLLMTTVY). Residues 1677-1892 (SAKDSSRFFL…SLTSLQSSER (216 aa)) lie on the Extracellular side of the membrane. N-linked (GlcNAc) asparagine glycans are attached at residues asparagine 1712 and asparagine 1822. Residues 1893 to 1921 (GFAWIVSQVVYYLLVCYYAFIQGCRLKRQ) traverse the membrane as a helical segment. The Cytoplasmic segment spans residues 1922–1930 (RLAFFTRKR). The chain crosses the membrane as a helical span at residues 1931–1949 (NLLDTSIVLISFSILGLSM). At 1950–1980 (QSLSLLHKKMQQYHCDRDRFISFYEALRVNS) the chain is on the extracellular side. The chain crosses the membrane as a helical span at residues 1981–2002 (AVTHLRGFLLLFATVRVWDLLR). Residues 2003–2019 (HHAQLQVINKTLSKAWD) are Cytoplasmic-facing. Residues 2020 to 2044 (EVLGFILIIVVLLSSYAMTFNLLFG) form a helical membrane-spanning segment. The tract at residues 2043 to 2081 (FGWSISDYQSFFRSIVTVVGLLMGTSKHKEVIALYPILG) is channel pore-region. Topologically, residues 2045 to 2077 (WSISDYQSFFRSIVTVVGLLMGTSKHKEVIALY) are extracellular. A helical transmembrane segment spans residues 2078-2097 (PILGSLLVLSSIILMGLVII). Residues 2098–2151 (NLFVSAILIAFGKERKACEKEATLTDMLLQKLSSLLGIRLHQNPSEEHADNTGY) lie on the Cytoplasmic side of the membrane.

This sequence belongs to the polycystin family. As to quaternary structure, heterotetramer with PKD2L1, composed of 3 subunit of PKD2L1 and 1 subunit of PKD1L3. Post-translationally, autoproteolytically processed at the GPS region of the GAIN-B domain; this cleavage modulates receptor activity. As to expression, expressed in a subset of taste receptor cells (type III taste cells) distinct from those involved in bitter, sweet and umami taste. Expressed in circumvallate and foliate taste buds, but not in surrounding non-gustatory lingual epithelium cells. Expressed in testis.

The protein localises to the cell membrane. The enzyme catalyses Ca(2+)(in) = Ca(2+)(out). The catalysed reaction is Na(+)(in) = Na(+)(out). It catalyses the reaction K(+)(in) = K(+)(out). It carries out the reaction Mg(2+)(in) = Mg(2+)(out). Its activity is regulated as follows. The non-selective cation channel is gated following an off-response property by acid: gated open after the removal of acid stimulus, but not during acid application. Non-selective cation channel activity is inhibited by capsaicin. Regulation of non-selective cation channel activity by external Ca(2+) is bimodal, first sensitizing and subsequently inactivating the current. The apo (closed) heterotetramer has an asymmetric selectivity filter (SF) guarded by Lys-2069 in absence of Ca(2+). However, Ca(2+)-entrance to the SF vestibule is accompanied by a swing motion of Lys-2069 on PKD1L3. Functionally, pore-forming subunit of a heterotetrameric, non-selective cation channel that is permeable to Ca(2+). Also shows permeability towards NA(1+), K(+) and Mg(2+). Heterotetrameric complex channel is activated by external low pH and Ca(2+), but opens only when the extracellular pH rises again and after the removal of acid stimulus. May act as a sour taste receptor in gustatory cells; however, its contribution to sour taste perception is unclear in vivo and may be indirect. This chain is Polycystin-1-like protein 3, found in Mus musculus (Mouse).